The following is a 139-amino-acid chain: Nuclear transcription factor Y subunit B-4 (139 aa).

The DNA-binding element occupies 8 to 14 (LPIANVG). A subunit association domain (SAD) region spans residues 35–46 (VQECATEFISFV). Positions 90-115 (YREAERERTEHNKGSNDSGNEKETNT) are enriched in basic and acidic residues. The tract at residues 90–139 (YREAERERTEHNKGSNDSGNEKETNTRSDVQNQSTKFIRVVEKGSSSSAR) is disordered. Over residues 116-125 (RSDVQNQSTK) the composition is skewed to polar residues.

The protein belongs to the NFYB/HAP3 subunit family. Heterotrimeric transcription factor composed of three components, NF-YA, NF-YB and NF-YC. NF-YB and NF-YC must interact and dimerize for NF-YA association and DNA binding. Expressed in flowers, siliques and young rosettes.

The protein resides in the nucleus. In terms of biological role, component of the NF-Y/HAP transcription factor complex. The NF-Y complex stimulates the transcription of various genes by recognizing and binding to a CCAAT motif in promoters. The protein is Nuclear transcription factor Y subunit B-4 (NFYB4) of Arabidopsis thaliana (Mouse-ear cress).